The primary structure comprises 363 residues: 3-dehydroquinate synthase (363 aa).

NAD(+)-binding positions include 75–80 (DAEEGK), 109–113 (GAVTD), 133–134 (TS), Lys-146, Lys-155, and 173–176 (TLDT). The Zn(2+) site is built by Glu-188, His-251, and His-267.

Belongs to the sugar phosphate cyclases superfamily. Dehydroquinate synthase family. Requires Co(2+) as cofactor. Zn(2+) is required as a cofactor. NAD(+) serves as cofactor.

The protein resides in the cytoplasm. The enzyme catalyses 7-phospho-2-dehydro-3-deoxy-D-arabino-heptonate = 3-dehydroquinate + phosphate. Its pathway is metabolic intermediate biosynthesis; chorismate biosynthesis; chorismate from D-erythrose 4-phosphate and phosphoenolpyruvate: step 2/7. Functionally, catalyzes the conversion of 3-deoxy-D-arabino-heptulosonate 7-phosphate (DAHP) to dehydroquinate (DHQ). The sequence is that of 3-dehydroquinate synthase from Pseudarthrobacter chlorophenolicus (strain ATCC 700700 / DSM 12829 / CIP 107037 / JCM 12360 / KCTC 9906 / NCIMB 13794 / A6) (Arthrobacter chlorophenolicus).